We begin with the raw amino-acid sequence, 205 residues long: Large ribosomal subunit protein bL25 (205 aa).

The interval 184-205 is disordered; that stretch reads QPAGAVSEAAEGGEAAGETPAA. Over residues 186 to 205 the composition is skewed to low complexity; sequence AGAVSEAAEGGEAAGETPAA.

It belongs to the bacterial ribosomal protein bL25 family. CTC subfamily. Part of the 50S ribosomal subunit; part of the 5S rRNA/L5/L18/L25 subcomplex. Contacts the 5S rRNA. Binds to the 5S rRNA independently of L5 and L18.

In terms of biological role, this is one of the proteins that binds to the 5S RNA in the ribosome where it forms part of the central protuberance. This chain is Large ribosomal subunit protein bL25, found in Cupriavidus necator (strain ATCC 17699 / DSM 428 / KCTC 22496 / NCIMB 10442 / H16 / Stanier 337) (Ralstonia eutropha).